The primary structure comprises 94 residues: Co-chaperonin GroES (94 aa).

Belongs to the GroES chaperonin family. Heptamer of 7 subunits arranged in a ring. Interacts with the chaperonin GroEL.

The protein localises to the cytoplasm. In terms of biological role, together with the chaperonin GroEL, plays an essential role in assisting protein folding. The GroEL-GroES system forms a nano-cage that allows encapsulation of the non-native substrate proteins and provides a physical environment optimized to promote and accelerate protein folding. GroES binds to the apical surface of the GroEL ring, thereby capping the opening of the GroEL channel. The sequence is that of Co-chaperonin GroES from Shouchella clausii (strain KSM-K16) (Alkalihalobacillus clausii).